A 429-amino-acid polypeptide reads, in one-letter code: Enolase (429 aa).

Glutamine 163 is a (2R)-2-phosphoglycerate binding site. Glutamate 205 functions as the Proton donor in the catalytic mechanism. 3 residues coordinate Mg(2+): aspartate 242, glutamate 285, and aspartate 312. (2R)-2-phosphoglycerate contacts are provided by lysine 337, arginine 366, serine 367, and lysine 388. Lysine 337 functions as the Proton acceptor in the catalytic mechanism.

This sequence belongs to the enolase family. Component of the RNA degradosome, a multiprotein complex involved in RNA processing and mRNA degradation. It depends on Mg(2+) as a cofactor.

It localises to the cytoplasm. The protein resides in the secreted. Its subcellular location is the cell surface. It catalyses the reaction (2R)-2-phosphoglycerate = phosphoenolpyruvate + H2O. It functions in the pathway carbohydrate degradation; glycolysis; pyruvate from D-glyceraldehyde 3-phosphate: step 4/5. Its function is as follows. Catalyzes the reversible conversion of 2-phosphoglycerate (2-PG) into phosphoenolpyruvate (PEP). It is essential for the degradation of carbohydrates via glycolysis. This chain is Enolase, found in Alkalilimnicola ehrlichii (strain ATCC BAA-1101 / DSM 17681 / MLHE-1).